Here is a 126-residue protein sequence, read N- to C-terminus: Fluoride-specific ion channel FluC 2 (126 aa).

4 helical membrane-spanning segments follow: residues 11–31, 36–56, 69–89, and 93–113; these read VLLIGLGGFLGAVCRFLICEH, LGILSVNVLGSFMLGMIMYDA, AFGTGFIGAFTTFSTFAVQSF, and FLPALGNISANLFLTLTGVFF. Residues Gly76 and Thr79 each contribute to the Na(+) site.

It belongs to the fluoride channel Fluc/FEX (TC 1.A.43) family.

It is found in the cell membrane. The catalysed reaction is fluoride(in) = fluoride(out). With respect to regulation, na(+) is not transported, but it plays an essential structural role and its presence is essential for fluoride channel function. Its function is as follows. Fluoride-specific ion channel. Important for reducing fluoride concentration in the cell, thus reducing its toxicity. This chain is Fluoride-specific ion channel FluC 2, found in Methanosarcina mazei (strain ATCC BAA-159 / DSM 3647 / Goe1 / Go1 / JCM 11833 / OCM 88) (Methanosarcina frisia).